The following is a 25-amino-acid chain: Androctonin (25 aa).

Intrachain disulfides connect Cys-4–Cys-20 and Cys-10–Cys-16.

It is found in the secreted. Functionally, active against both bacteria (Gram-positive and Gram-negative) and filamentous fungi. Acts on the membrane of the bacterial cells. It destabilize a membrane by modifying its properties. In Androctonus australis (Sahara scorpion), this protein is Androctonin.